We begin with the raw amino-acid sequence, 218 residues long: Small ribosomal subunit protein uS3c (218 aa).

The KH type-2 domain occupies 47-118; that stretch reads VQKNMKTSSG…KLNIAITRIE (72 aa).

It belongs to the universal ribosomal protein uS3 family. Part of the 30S ribosomal subunit.

It is found in the plastid. The protein localises to the chloroplast. This is Small ribosomal subunit protein uS3c (rps3) from Lactuca sativa (Garden lettuce).